A 223-amino-acid polypeptide reads, in one-letter code: uncharacterized protein (223 aa).

To M.jannaschii MJ0575.

This is an uncharacterized protein from Methanocaldococcus jannaschii (strain ATCC 43067 / DSM 2661 / JAL-1 / JCM 10045 / NBRC 100440) (Methanococcus jannaschii).